Reading from the N-terminus, the 393-residue chain is NAD(P)H-quinone oxidoreductase subunit H, chloroplastic (393 aa).

The protein belongs to the complex I 49 kDa subunit family. As to quaternary structure, NDH is composed of at least 16 different subunits, 5 of which are encoded in the nucleus.

Its subcellular location is the plastid. The protein resides in the chloroplast thylakoid membrane. It catalyses the reaction a plastoquinone + NADH + (n+1) H(+)(in) = a plastoquinol + NAD(+) + n H(+)(out). It carries out the reaction a plastoquinone + NADPH + (n+1) H(+)(in) = a plastoquinol + NADP(+) + n H(+)(out). Its function is as follows. NDH shuttles electrons from NAD(P)H:plastoquinone, via FMN and iron-sulfur (Fe-S) centers, to quinones in the photosynthetic chain and possibly in a chloroplast respiratory chain. The immediate electron acceptor for the enzyme in this species is believed to be plastoquinone. Couples the redox reaction to proton translocation, and thus conserves the redox energy in a proton gradient. In Populus alba (White poplar), this protein is NAD(P)H-quinone oxidoreductase subunit H, chloroplastic.